Reading from the N-terminus, the 441-residue chain is Collagen alpha-1(XXVI) chain (441 aa).

An N-terminal signal peptide occupies residues 1-20 (MKLALLLPWACCCLCGSALA). The EMI domain maps to 52 to 128 (RRHWCHHTVT…PGFTGSNCDE (77 aa)). 3 cysteine pairs are disulfide-bonded: Cys-56-Cys-118, Cys-83-Cys-89, and Cys-117-Cys-126. A glycan (N-linked (GlcNAc...) asparagine) is linked at Asn-70. Asn-132 carries N-linked (GlcNAc...) asparagine glycosylation. 2 disordered regions span residues 156-362 (AERP…AEGE) and 390-441 (PLAS…SSRK). 2 consecutive Collagen-like domains span residues 199–267 (GPAG…PGPS) and 302–355 (GVPG…EGEK). Pro residues-rich tracts occupy residues 200-215 (PAGPPGQTGPPGPAGP), 231-243 (AGPPGLLGPPGPR), 252-269 (PGPPGPPGPAGNPGPSPN), and 306-327 (PRGPPGPPGPPGPRGPPGPPGT). The segment covering 348-357 (VKGEEGEKAA) has biased composition (basic and acidic residues).

Homotrimer or heterotrimer. In terms of processing, hydroxylated on proline residues.

The protein localises to the secreted. Its subcellular location is the extracellular space. The protein resides in the extracellular matrix. This is Collagen alpha-1(XXVI) chain (COL26A1) from Homo sapiens (Human).